The following is an 874-amino-acid chain: Tyrosine-protein kinase receptor TYRO3 (874 aa).

A signal peptide spans M1–G20. Ig-like C2-type domains lie at V21–S106 and P117–H198. Residues V21 to W411 lie on the Extracellular side of the membrane. Cysteines 42 and 95 form a disulfide. N135, N174, N217, N270, N305, and N373 each carry an N-linked (GlcNAc...) asparagine glycan. Cysteines 138 and 181 form a disulfide. Fibronectin type-III domains lie at R202 to A297 and P299 to A403. The chain crosses the membrane as a helical span at residues V412 to I432. The Cytoplasmic portion of the chain corresponds to R433 to V874. Residues L497–L768 form the Protein kinase domain. ATP contacts are provided by residues L503–V511 and K529. The Proton acceptor role is filled by D634. The residue at position 665 (Y665) is a Phosphotyrosine; by autocatalysis.

It belongs to the protein kinase superfamily. Tyr protein kinase family. AXL/UFO subfamily.

It localises to the cell membrane. It catalyses the reaction L-tyrosyl-[protein] + ATP = O-phospho-L-tyrosyl-[protein] + ADP + H(+). May be involved in cell adhesion processes, particularly in the central nervous system. The chain is Tyrosine-protein kinase receptor TYRO3 (tyro3) from Danio rerio (Zebrafish).